The sequence spans 666 residues: Protein scarlet (666 aa).

Residues 1-417 (MSDSDSKRID…TIQWLRFIQK (417 aa)) are Cytoplasmic-facing. A disordered region spans residues 26-55 (PVGSTIEVPSLDSTPKLSKRNSSERSLPLR). In terms of domain architecture, ABC transporter spans 69 to 316 (LVWRDLCVYT…FANHGYYCPE (248 aa)). Residue 108–115 (GSSGSGKT) participates in ATP binding. Residues 418 to 438 (IAMAFIIGACFAGTTEPSQLG) traverse the membrane as a helical segment. At 439-444 (VQAVQG) the chain is on the extracellular side. A helical membrane pass occupies residues 445–465 (ALFIMISENTYHPMYSVLNLF). Residues 466 to 490 (PQGFPLFMRETRSGLYSTGQYYAAN) lie on the Cytoplasmic side of the membrane. Residues 491-511 (ILALLPGMIIEPLIFVIICYW) traverse the membrane as a helical segment. At 512–518 (LTGLRST) the chain is on the extracellular side. Residues 519–539 (FYAFGVTAMCVVLVMNVATAC) form a helical membrane-spanning segment. Residues 540–551 (GCFFSTAFNSVP) are Cytoplasmic-facing. A helical transmembrane segment spans residues 552–572 (LAMAYLVPLDYIFMITSGIFI). The Extracellular portion of the chain corresponds to 573–639 (QVNSLPVAFW…YSFNESNVYR (67 aa)). 2 N-linked (GlcNAc...) asparagine glycosylation sites follow: asparagine 607 and asparagine 633. Residues 640–660 (NLLAMVGLYFGFHLLGYYCLW) form a helical membrane-spanning segment. The Cytoplasmic segment spans residues 661 to 666 (RRARKL).

It belongs to the ABC transporter superfamily. ABCG family. Eye pigment precursor importer (TC 3.A.1.204) subfamily. As to quaternary structure, may form a heterodimer with w/white. In terms of tissue distribution, expressed in the eye, specifically in primary pigment cells, secondary pigment cells and retinula cells (at protein level).

It is found in the cytoplasmic vesicle membrane. The enzyme catalyses L-kynurenine(out) + ATP + H2O = L-kynurenine(in) + ADP + phosphate + H(+). Its function is as follows. ATP-dependent transporter of the ATP-binding cassette (ABC) family which transports various molecules including bioamines, neurotransmitters and metabolic intermediates. In the eye and probably in association with w/white, required for the transport of the eye brown pigment precursors, kynurenine and probably tryptophan, into pigment cell granules. In Malpighian tubules and pupal eyes, involved in kynurenine transport. Probably in association with w/white, plays a role in zinc storage granule biogenesis in Malpighian tubule principal epithelial cells. This chain is Protein scarlet, found in Drosophila melanogaster (Fruit fly).